A 501-amino-acid chain; its full sequence is Lysine--tRNA ligase (501 aa).

The Mg(2+) site is built by glutamate 411 and glutamate 418.

This sequence belongs to the class-II aminoacyl-tRNA synthetase family. As to quaternary structure, homodimer. The cofactor is Mg(2+).

The protein localises to the cytoplasm. It carries out the reaction tRNA(Lys) + L-lysine + ATP = L-lysyl-tRNA(Lys) + AMP + diphosphate. The sequence is that of Lysine--tRNA ligase from Shewanella woodyi (strain ATCC 51908 / MS32).